The following is a 78-amino-acid chain: Protein GPR15LG (78 aa).

A signal peptide spans 1–24 (MRLLALSGLLCMLLLCFCIFSSEG). 2 disulfide bridges follow: Cys-37/Cys-60 and Cys-38/Cys-57.

In terms of assembly, interacts with SUSD2; the interaction is direct. Highly abundant in the testis, colon, eye, and tongue. Detected in the epithelial layer of the colon, but not the small intestine.

It localises to the secreted. Highly cationic protein that has multiple functions. Acts as a chemotactic factor that mediates lymphocytes recruitment to epithelia through binding and activation of the G-protein coupled receptor GPR15. May be a tumor suppressor; together with SUSD2 has a growth inhibitory effect on colon cancer cells which includes G1 cell cycle arrest. May regulate keratinocyte proliferation. In addition, through activation of Mas-related G protein-coupled receptors (MRGPRs) contributes to pruritogenesis by activating itch-selective sensory neurons and mast cells degranulation. Its function is as follows. Has antimicrobial activity against Gram-positive bacteria, including Staphylococcus aureus and Actinomyces spec., and Mycoplasma hominis and lentivirus. The chain is Protein GPR15LG (Gpr15lg) from Mus musculus (Mouse).